Consider the following 222-residue polypeptide: Deoxyribose-phosphate aldolase (222 aa).

The active-site Proton donor/acceptor is Asp-93. Residue Lys-156 is the Schiff-base intermediate with acetaldehyde of the active site. Lys-186 functions as the Proton donor/acceptor in the catalytic mechanism.

The protein belongs to the DeoC/FbaB aldolase family. DeoC type 1 subfamily.

Its subcellular location is the cytoplasm. It catalyses the reaction 2-deoxy-D-ribose 5-phosphate = D-glyceraldehyde 3-phosphate + acetaldehyde. It participates in carbohydrate degradation; 2-deoxy-D-ribose 1-phosphate degradation; D-glyceraldehyde 3-phosphate and acetaldehyde from 2-deoxy-alpha-D-ribose 1-phosphate: step 2/2. Functionally, catalyzes a reversible aldol reaction between acetaldehyde and D-glyceraldehyde 3-phosphate to generate 2-deoxy-D-ribose 5-phosphate. The sequence is that of Deoxyribose-phosphate aldolase from Nocardia farcinica (strain IFM 10152).